We begin with the raw amino-acid sequence, 2267 residues long: Acetyl-CoA carboxylase 1 (2267 aa).

A Biotin carboxylation domain is found at 38-544 (PIHSVLVANN…HTGWLDSRIA (507 aa)). Residues 190–384 (PESCNSIPEE…AAQVVVGMGV (195 aa)) form the ATP-grasp domain. 216 to 273 (CQVVGYPAMIKASWGGGGKGIRKVHNDDEVRALFKQVQGEVPGSPIFIMKVASQSRHL) contacts ATP. Glu-339, Glu-353, and Asn-355 together coordinate Mg(2+). Residues Glu-339, Glu-353, and Asn-355 each coordinate Mn(2+). Arg-357 is an active-site residue. The Biotinyl-binding domain occupies 671–745 (LQKEHDPSKL…QAADLIARLD (75 aa)). The residue at position 712 (Lys-712) is an N6-biotinyllysine. Residues 1502-1843 (PYKPLDAIDL…YVGGPLPIMK (342 aa)) form the CoA carboxyltransferase N-terminal domain. The tract at residues 1502-2163 (PYKPLDAIDL…EDALAKEIRE (662 aa)) is carboxyltransferase. CoA contacts are provided by Arg-1752, Lys-2053, and Arg-2055. The 317-residue stretch at 1847-2163 (PPDRPVTYFP…EDALAKEIRE (317 aa)) folds into the CoA carboxyltransferase C-terminal domain.

In terms of assembly, homodimer. Requires Mg(2+) as cofactor. The cofactor is Mn(2+). Biotin serves as cofactor.

It localises to the cytoplasm. Its subcellular location is the cytosol. It catalyses the reaction hydrogencarbonate + acetyl-CoA + ATP = malonyl-CoA + ADP + phosphate + H(+). The catalysed reaction is N(6)-biotinyl-L-lysyl-[protein] + hydrogencarbonate + ATP = N(6)-carboxybiotinyl-L-lysyl-[protein] + ADP + phosphate + H(+). It participates in lipid metabolism; malonyl-CoA biosynthesis; malonyl-CoA from acetyl-CoA: step 1/1. Its function is as follows. Multifunctional enzyme that catalyzes the carboxylation of acetyl-CoA, forming malonyl-CoA, which is used in the plastid for fatty acid synthesis and in the cytosol in various biosynthetic pathways including fatty acid elongation. The sequence is that of Acetyl-CoA carboxylase 1 (ACC1) from Oryza sativa subsp. japonica (Rice).